A 201-amino-acid polypeptide reads, in one-letter code: ATP-dependent Clp protease proteolytic subunit (201 aa).

The active-site Nucleophile is the serine 98. The active site involves histidine 123.

Belongs to the peptidase S14 family. In terms of assembly, fourteen ClpP subunits assemble into 2 heptameric rings which stack back to back to give a disk-like structure with a central cavity, resembling the structure of eukaryotic proteasomes.

Its subcellular location is the cytoplasm. The catalysed reaction is Hydrolysis of proteins to small peptides in the presence of ATP and magnesium. alpha-casein is the usual test substrate. In the absence of ATP, only oligopeptides shorter than five residues are hydrolyzed (such as succinyl-Leu-Tyr-|-NHMec, and Leu-Tyr-Leu-|-Tyr-Trp, in which cleavage of the -Tyr-|-Leu- and -Tyr-|-Trp bonds also occurs).. In terms of biological role, cleaves peptides in various proteins in a process that requires ATP hydrolysis. Has a chymotrypsin-like activity. Plays a major role in the degradation of misfolded proteins. This chain is ATP-dependent Clp protease proteolytic subunit, found in Rickettsia conorii (strain ATCC VR-613 / Malish 7).